Reading from the N-terminus, the 3092-residue chain is MDSQNIKYGDNDVAIIGIGLRLPSSINRPSELWEGFLAGFDGIVETTNRWSDSFASMDEISSKYADEWMSFDPLFFGIIPTEVPSIDPQQRLLLKCTWEAFEDANIDPFKLRGTNTSVYVGASSLDYASINVDFDETPMNIFNSNMSGVSNRISYCFDFRGASLTIDTACSSSLNAVHLGYKSIISGESDYSIVGGCNFIMSPHTSRSFESANVTSKTGKSKAFDQDANGFVRSEGVVSIILKKMSKAIQDGDQIYSVIKGTNSNVDGNLNKGNFFAPSKQSQANNIKSAMESCNKETTNSTPIALNDIDFFELHGTSTQIGDPIECEGVSSVFKESREKPLLIGSIKANIGHLEPASGVASLAKVALMFKHRQFVKNINFDKPNPNIKFDEWKIKVCTENTPFPNNKKVSIAINSFGITGSNVCLILTEYIKPTTTKTTNGTAILSTFPLLSTTTTATTNNNGNQKYLIPISANSKPSLESYKEKLINSSKEFSETINFKDFVKYQLDSKTLKLTQRSVIIASNWEEAGSTQSIITTNSNRSGNIIKDTNKNPQLVFVFSGQGPQWSKMFTQLYDQEPIFKQKTDQIDSLLSKHYGYSILNKLNSIKDDDTVTINEPILAQPSVFMIQMALIELYKHWGILASISIGHSLGEVSSAVCSGMIDLETGCFIIYHRSRLQQQTSGSGKMLVASLNEQKFNQEFDNFQQKYPSIEIACFNSPSSIVLAGKESELQEISNILKEQETFSIFLGAQSSFHSSSQEPIKDELLKQLKDIKSTKSNIPNFSTVTSNLFNDDDEVAQQPDEASAHNTNTITLFDSKYVYENVRKPVQFEKTIKNVFNYIEKKGLGSSVIFLEISASPVLGNYIREMIPQDSNYFFIEDQTISVLSSLNKKNKDQVLEIQTSISQLYCKGYNVNFNCSNQTNSLDFQNTEYKQLSDVLFKYSWDDESYWSVAPLISNYIKNGPAINQLGNRNERQPYQSYVSIIDIKKEPFEFFKGHSSRNRVIYPGCGYIDSILKAFPDQDLTIQSMEFKSAVLLLPSMKTYLSTNITPSGKNEYRVSFHYKDKKTNKWSLSCSGKFSITKHNDEVVRKFDIEKLKAKTNFVTIQKKELYETIKYKAQFTFEGKFQSIEEVSYGHNCCLAKVPLTTLSSYDNQSFLNLCVIDSAFQPFCAVKENKEPMLFSSIENLKFFSKNIPKSAEDREKHKFVYTYTQIKEKKCGSYFVSILTMLQDGTILFFSPLVVYTQLTPYKNQYIIESPNDNLYKICYQSKDSTLPSPLILKDKFDQLNFETTDEQSQIIRKALSNCLFAIFKRNNNLFTKEEIKSQSIDYLIEKYCLIIDNDDDNDGIDDNSILVNGGVASIDDMVLASTAGKETTILNNGKRVLAKLIFQILKSNVDLIDWDNIATFTNTSSKQQLNIIQAIDNLIVTPLSVTNQVTESDLISKTQLDIINNRMKIKQYELISNTIATDLIKPIINNSILFRILEINSGFGYLSEMIINKINQLLIEFENSYEIEIEFTFTLNGTNQDDNKEISNSIKEKLTNLLISKSSISIIFKELNLNESFLEQKFNPSYYDLIVLTNLSTITNLNESIEFINSILYPNGHLIIIDTKNQSNFQDYEIFEQFLIFDNFGGGIVDDNIDWNQIFQNNNLNNAIVTPNIQPHVIQVQKSKLYDKVMSTLDDITGPYDQIIIIGDQMQDTNEDLFQNPIMDINKQGTDIYRIKTIEEFEKHCLTIPPTDKSILFFISAMNNLSLGDYKQVNFDYIKINQYLLANKLRCPFILATRSALKESTNALAASLIGSFRYFSEFSNILNLYSFDFGEMVFTIASGSPFKWMNMAIDLLDPNKHIQREYIFRNGNETWFERIGKIKRVKSKYQSKSYLDDKEDSLVARLNQNLEYQLEAKQSNLKENEIEVQVVATGINFKDSLIFRNLVPPVLANHDGDYSKPEFGIECSGIVSRIGSKVTKFKVGDSVLGISWKSTSSHAINYQDAFVLKPDNISFVEAASIPLVYCTSFYSLFYSGNLKIENNESVLIHQASGGIGLACLNILKSCGFKSKLYVTVGSKEKEDYLRETYGDFITGIYSSRNTDFLENIKTDLSKINNNNNEIKENNTINESFDDVDQILPFIHKKGVDLIINTLPFEFLDTNFLLLGQGGRIVDLSVNHLNNNDTTDFSKFKWFIGYSTVEIFYNGFEKSKHILQLIIDMIKNKELPLIPIKEYPINQIKDAIEFIGQRKHIGKIVINHKVGLRDGCSNLVQDTIKSLQNHLKDNYLVASPDFKFMGDSLGKTILLTGQTGLSLSIIQISLLNNYQDLEGIIVISKSPIRNELQYLISFAKYLSRKTRVHFKQADCSKFDEISKAISEIYEKDDPNLSPVESIFHNAFVPVMSEPQDIGMKHIDDAYDAKTTGAMNLYLLAILNGWKLKNFFFSSSVASVSGSSRQAGYCGANLVLESIAKTIQSQGIRCSTICWGSIGDIGYVSRNESVSKYVHGLGNISMPSNMVLGSLDLLLQQPTLSTDTTIVASFDFNNLPKLSTNGSNNLYYKFDYFTNPIQSNQNNCSSDDLSIREEILAKFSEFLSVDDQSKINLDIKLLDYGADSMVIVELKNYLDKTYTPNILSIQQLQNVTINQLIQSVTDAMNKLNGNENKSIKKSNKLVQQKQIDWVKEIKLDSSIKPTDEMIKLFKQLQQQLASPTTTTSNTVFLTGSSGFIGIYILFYLIKSVNCKIVYCLIRRKTIEEATTFLIEFLKVHQLYNQLTTDEINKIKPVLGDYTLDSFGLSVDQYTNLSNNVDLIINSAASVSFLMDYEDSKVESVEGVLQCLRFSCHNKLKKFVQVSTLGVYSDDKRDNLDDYTFAQIDPKIIQSKNSIINGYLQGKIVSEYHIKEAANRGIPCCIIRLPFIGPNPSTGVGNDSDFFQTLLQSCYAMSTYPKQESGLQLYSTPVTWVAQNLSFISMNPKCWSTSSNNPSSISENLTCYNLFGESICFNVLLTELASQLKWKPTPPGEFLKKLKSFPNEPSCNKLHVVLKNSKNLLLNIYIPGNYKLNPTLKQLLQSNNTYKGWKITPEMILTHLSFTFKKIKFINYK.

Residues 10-430 (DNDVAIIGIG…GSNVCLILTE (421 aa)) enclose the Ketosynthase family 3 (KS3) domain. Active-site for beta-ketoacyl synthase activity residues include cysteine 170, histidine 315, and histidine 353. The segment at 640–673 (GILASISIGHSLGEVSSAVCSGMIDLETGCFIIY) is acyl/malonyl transferase. The For acyl/malonyl transferase activity role is filled by serine 650. The interval 967 to 1087 (INQLGNRNER…GKFSITKHND (121 aa)) is N-terminal hotdog fold. In terms of domain architecture, PKS/mFAS DH spans 967–1254 (INQLGNRNER…YTQLTPYKNQ (288 aa)). Residue histidine 999 is the Proton acceptor; for dehydratase activity of the active site. The tract at residues 1103–1254 (NFVTIQKKEL…YTQLTPYKNQ (152 aa)) is C-terminal hotdog fold. Catalysis depends on aspartate 1165, which acts as the Proton donor; for dehydratase activity. Residues 2566 to 2644 (SDDLSIREEI…QLIQSVTDAM (79 aa)) enclose the Carrier domain. An O-(pantetheine 4'-phosphoryl)serine modification is found at serine 2604. A helical membrane pass occupies residues 2705 to 2725 (NTVFLTGSSGFIGIYILFYLI).

Requires pantetheine 4'-phosphate as cofactor.

It localises to the membrane. Functionally, probable polyketide synthase. This is Probable polyketide synthase 45 (pks45) from Dictyostelium discoideum (Social amoeba).